A 70-amino-acid chain; its full sequence is Protein SlyX homolog (70 aa).

Belongs to the SlyX family.

This Shewanella sp. (strain MR-4) protein is Protein SlyX homolog.